Here is a 199-residue protein sequence, read N- to C-terminus: Adenylyl-sulfate kinase (199 aa).

34 to 41 (GLSGSGKS) contributes to the ATP binding site. Residue S108 is the Phosphoserine intermediate of the active site.

This sequence belongs to the APS kinase family.

It carries out the reaction adenosine 5'-phosphosulfate + ATP = 3'-phosphoadenylyl sulfate + ADP + H(+). Its pathway is sulfur metabolism; hydrogen sulfide biosynthesis; sulfite from sulfate: step 2/3. Functionally, catalyzes the synthesis of activated sulfate. The polypeptide is Adenylyl-sulfate kinase (Staphylococcus carnosus (strain TM300)).